An 858-amino-acid polypeptide reads, in one-letter code: Heat shock protein 105 kDa (858 aa).

S2 bears the N-acetylserine mark. K471 is modified (N6-acetyllysine). Disordered stretches follow at residues K500 to A585 and V801 to D858. Acidic residues predominate over residues E504–M515. A phosphoserine mark is found at S509 and S510. Over residues Q533 to G549 the composition is skewed to polar residues. S558 is modified (phosphoserine). Basic and acidic residues-rich tracts occupy residues E564–A585 and P806–R815. S810 carries the phosphoserine modification. T816 is modified (phosphothreonine). Positions L822–F834 are enriched in basic and acidic residues.

Belongs to the heat shock protein 70 family. As to quaternary structure, interacts with HSPA8/HSC70. Interacts with HSPA1A (via NBD) and HSPA1B (via NBD). Phosphorylation on Ser-509 may be important for regulation of the HSPA8/HSC70 chaperone activity. Predominantly expressed in the brain and also found in the liver.

The protein resides in the cytoplasm. Acts as a nucleotide-exchange factor (NEF) for chaperone proteins HSPA1A and HSPA1B, promoting the release of ADP from HSPA1A/B thereby triggering substrate release. Prevents the aggregation of denatured proteins in cells under severe stress, on which the ATP levels decrease markedly. Inhibits HSPA8/HSC70 ATPase and chaperone activities. The protein is Heat shock protein 105 kDa (HSPH1) of Cricetulus griseus (Chinese hamster).